The sequence spans 226 residues: Ribose-5-phosphate isomerase A (226 aa).

Substrate is bound by residues 28 to 31 (TGST), 80 to 83 (DGAD), and 93 to 96 (KGGG). Glu-102 acts as the Proton acceptor in catalysis. Residue Lys-120 coordinates substrate.

Belongs to the ribose 5-phosphate isomerase family. In terms of assembly, homodimer.

The catalysed reaction is aldehydo-D-ribose 5-phosphate = D-ribulose 5-phosphate. It participates in carbohydrate degradation; pentose phosphate pathway; D-ribose 5-phosphate from D-ribulose 5-phosphate (non-oxidative stage): step 1/1. Functionally, catalyzes the reversible conversion of ribose-5-phosphate to ribulose 5-phosphate. The sequence is that of Ribose-5-phosphate isomerase A from Caulobacter sp. (strain K31).